A 260-amino-acid polypeptide reads, in one-letter code: Type III pantothenate kinase (260 aa).

ATP is bound at residue 6 to 13 (DAGNTNIV). 108 to 111 (GADR) is a substrate binding site. Asp110 serves as the catalytic Proton acceptor. Asp130 is a binding site for K(+). Thr133 lines the ATP pocket. Thr187 lines the substrate pocket.

It belongs to the type III pantothenate kinase family. Homodimer. Requires NH4(+) as cofactor. K(+) is required as a cofactor.

It is found in the cytoplasm. It catalyses the reaction (R)-pantothenate + ATP = (R)-4'-phosphopantothenate + ADP + H(+). It functions in the pathway cofactor biosynthesis; coenzyme A biosynthesis; CoA from (R)-pantothenate: step 1/5. Functionally, catalyzes the phosphorylation of pantothenate (Pan), the first step in CoA biosynthesis. The protein is Type III pantothenate kinase of Rhizorhabdus wittichii (strain DSM 6014 / CCUG 31198 / JCM 15750 / NBRC 105917 / EY 4224 / RW1) (Sphingomonas wittichii).